Consider the following 298-residue polypeptide: Iron-regulated virulence regulatory protein IrgB (298 aa).

Residues 1–59 (MQDLSAVKAFHALCQHKSLTAAAKALEQPKSTLSRRLAQLEEDLGQSLLMRQGNRLTLT) form the HTH lysR-type domain. Positions 19–38 (LTAAAKALEQPKSTLSRRLA) form a DNA-binding region, H-T-H motif.

The protein belongs to the LysR transcriptional regulatory family.

Functionally, transcription activation of the irgA gene. In the presence of sufficient iron, transcription of both irgA and irgB is negatively regulated by a fur-like protein. In low iron conditions, negative regulation of transcription is removed, and production of IrgB leads to positive transcriptional activation of irgA. This is Iron-regulated virulence regulatory protein IrgB (irgB) from Vibrio cholerae serotype O1 (strain ATCC 39541 / Classical Ogawa 395 / O395).